The following is a 287-amino-acid chain: Shikimate dehydrogenase (NADP(+)) (287 aa).

Residues 18–20 (SYS) and threonine 66 each bind shikimate. The Proton acceptor role is filled by lysine 70. Glutamate 82 contacts NADP(+). Shikimate-binding residues include asparagine 91 and aspartate 106. NADP(+) contacts are provided by residues 130–134 (GSGGA) and methionine 228. Position 230 (tyrosine 230) interacts with shikimate. Glycine 251 is a binding site for NADP(+).

It belongs to the shikimate dehydrogenase family. In terms of assembly, homodimer.

It carries out the reaction shikimate + NADP(+) = 3-dehydroshikimate + NADPH + H(+). Its pathway is metabolic intermediate biosynthesis; chorismate biosynthesis; chorismate from D-erythrose 4-phosphate and phosphoenolpyruvate: step 4/7. Involved in the biosynthesis of the chorismate, which leads to the biosynthesis of aromatic amino acids. Catalyzes the reversible NADPH linked reduction of 3-dehydroshikimate (DHSA) to yield shikimate (SA). The chain is Shikimate dehydrogenase (NADP(+)) from Chlorobium chlorochromatii (strain CaD3).